The primary structure comprises 530 residues: Cation channel sperm-associated protein 2 (530 aa).

The Cytoplasmic segment spans residues 1 to 108 (MAAYQQEEQM…LWAGWVLECP (108 aa)). The chain crosses the membrane as a helical span at residues 109-131 (LFKNFIIFLVFLNTIILMVEIEL). At 132–140 (LESTNTKLW) the chain is on the extracellular side. Residues 141–166 (PLKLTLEVAAWFILLIFILEILLKWL) traverse the membrane as a helical segment. Residues 167-175 (SNFSVFWKS) lie on the Cytoplasmic side of the membrane. A helical membrane pass occupies residues 176–200 (AWNVFDFVVTMLSLLPEVVVLVGVT). Residues 201–203 (GQS) lie on the Extracellular side of the membrane. The chain crosses the membrane as a helical span at residues 204–222 (VWLQLLRICRVLRSLKLLA). The Cytoplasmic portion of the chain corresponds to 223-239 (QFRQIQIIILVLVRALK). Residues 240 to 262 (SMTFLLMLLLIFFYIFAVTGVYV) traverse the membrane as a helical segment. The Extracellular portion of the chain corresponds to 263–281 (FSEYTRSPRQDLEYHVFFS). Positions 282 to 294 (DLPNSLVTVFILF) form an intramembrane region, helical; Pore-forming. Over 295-314 (TLDHWYALLQDVWKVPEVSR) the chain is Extracellular. Residues 315–341 (IFSSIYFILWLLLGSIIFRSIIVAMMV) form a helical membrane-spanning segment. Residues 342 to 530 (TNFQNIRKEL…VQALMNLEDK (189 aa)) lie on the Cytoplasmic side of the membrane. The interval 378–458 (MSHEALTSSH…TSSSYSSSSE (81 aa)) is disordered. The segment covering 429 to 440 (KTEETLSKKREY) has biased composition (basic and acidic residues). A compositionally biased stretch (low complexity) spans 442–458 (SSSCVSSTSSSYSSSSE).

This sequence belongs to the cation channel sperm-associated (TC 1.A.1.19) family. As to quaternary structure, component of the CatSper complex or CatSpermasome composed of the core pore-forming members CATSPER1, CATSPER2, CATSPER3 and CATSPER4 as well as auxiliary members CATSPERB, CATSPERG, CATSPERD, CATSPERE, CATSPERZ, C2CD6/CATSPERT, TMEM249, TMEM262 and EFCAB9. HSPA1 may be an additional auxiliary complex member. The core complex members CATSPER1, CATSPER2, CATSPER3 and CATSPER4 form a heterotetrameric channel. The auxiliary CATSPERB, CATSPERG, CATSPERD and CATSPERE subunits form a pavilion-like structure over the pore which stabilizes the complex through interactions with CATSPER4, CATSPER3, CATSPER1 and CATSPER2 respectively. TMEM262/CATSPERH interacts with CATSPERB, further stabilizing the complex. C2CD6/CATSPERT interacts at least with CATSPERD and is required for targeting the CatSper complex in the flagellar membrane. Interacts with Ca(v)3.3/CACNA1I, leading to suppression of T-type calcium channel activity. In terms of tissue distribution, testis-specific.

It is found in the cell projection. The protein localises to the cilium. It localises to the flagellum membrane. The catalysed reaction is Ca(2+)(in) = Ca(2+)(out). The CatSper calcium channel is indirectly activated by extracellular progesterone and prostaglandins following the sequence: progesterone &gt; PGF1-alpha = PGE1 &gt; PGA1 &gt; PGE2 &gt;&gt; PGD2. The CatSper calcium channel is directly inhibited by endocannabinoid 2-arachidonoylglycerol (2AG). Indirect activation by progesterone takes place via the following mechanism: progesterone binds and activates the acylglycerol lipase ABHD2, which in turn mediates hydrolysis of 2AG inhibitor, relieving inhibition of the CatSper channel. The primary effect of progesterone activation is to shift voltage dependence towards more physiological, negative membrane potentials; it is not mediated by metabotropic receptors and second messengers. Sperm capacitation enhances the effect of progesterone by providing additional negative shift. Also activated by the elevation of intracellular pH. Its function is as follows. Pore-forming subunit of the CatSper complex, a sperm-specific voltage-gated calcium channel, that plays a central role in calcium-dependent physiological responses essential for successful fertilization, such as sperm hyperactivation, acrosome reaction and chemotaxis towards the oocyte. In Homo sapiens (Human), this protein is Cation channel sperm-associated protein 2 (CATSPER2).